Here is a 235-residue protein sequence, read N- to C-terminus: MGQKVHPHGIRLGIVKPWNSTWFANTQDFADNLDGDFKVRQFLNKELANASVSRITIERPAKSIRVTIHTARPGIVIGKKGEDVEKLRNAVAAIAGVPAQINIAEVKKPELDAKLVAGSIASQLERRVMFRRAMKKAVQNAMRLGAKGIKVEVSGRLGGAEIARSEWYREGRVPLHTLRADIDYNTSEAHTTYGVIGVKVWIFKGEILGGMAAIAQQPEQQPATPKKAPRGKGRK.

Residues 39 to 107 (VRQFLNKELA…PAQINIAEVK (69 aa)) form the KH type-2 domain. Over residues 215–226 (AQQPEQQPATPK) the composition is skewed to low complexity. Positions 215-235 (AQQPEQQPATPKKAPRGKGRK) are disordered.

Belongs to the universal ribosomal protein uS3 family. As to quaternary structure, part of the 30S ribosomal subunit. Forms a tight complex with proteins S10 and S14.

Its function is as follows. Binds the lower part of the 30S subunit head. Binds mRNA in the 70S ribosome, positioning it for translation. The protein is Small ribosomal subunit protein uS3 of Histophilus somni (strain 129Pt) (Haemophilus somnus).